The primary structure comprises 313 residues: 4-hydroxy-3-methylbut-2-enyl diphosphate reductase (313 aa).

Cysteine 14 contacts [4Fe-4S] cluster. (2E)-4-hydroxy-3-methylbut-2-enyl diphosphate-binding residues include histidine 43 and histidine 76. Histidine 43 and histidine 76 together coordinate dimethylallyl diphosphate. Residues histidine 43 and histidine 76 each contribute to the isopentenyl diphosphate site. Cysteine 98 contributes to the [4Fe-4S] cluster binding site. Histidine 126 is a (2E)-4-hydroxy-3-methylbut-2-enyl diphosphate binding site. Histidine 126 lines the dimethylallyl diphosphate pocket. Histidine 126 provides a ligand contact to isopentenyl diphosphate. The active-site Proton donor is the glutamate 128. Residue threonine 166 coordinates (2E)-4-hydroxy-3-methylbut-2-enyl diphosphate. [4Fe-4S] cluster is bound at residue cysteine 196. (2E)-4-hydroxy-3-methylbut-2-enyl diphosphate-binding residues include serine 224, serine 225, asparagine 226, and serine 269. The dimethylallyl diphosphate site is built by serine 224, serine 225, asparagine 226, and serine 269. Positions 224, 225, 226, and 269 each coordinate isopentenyl diphosphate.

It belongs to the IspH family. [4Fe-4S] cluster is required as a cofactor.

It catalyses the reaction isopentenyl diphosphate + 2 oxidized [2Fe-2S]-[ferredoxin] + H2O = (2E)-4-hydroxy-3-methylbut-2-enyl diphosphate + 2 reduced [2Fe-2S]-[ferredoxin] + 2 H(+). The enzyme catalyses dimethylallyl diphosphate + 2 oxidized [2Fe-2S]-[ferredoxin] + H2O = (2E)-4-hydroxy-3-methylbut-2-enyl diphosphate + 2 reduced [2Fe-2S]-[ferredoxin] + 2 H(+). The protein operates within isoprenoid biosynthesis; dimethylallyl diphosphate biosynthesis; dimethylallyl diphosphate from (2E)-4-hydroxy-3-methylbutenyl diphosphate: step 1/1. Its pathway is isoprenoid biosynthesis; isopentenyl diphosphate biosynthesis via DXP pathway; isopentenyl diphosphate from 1-deoxy-D-xylulose 5-phosphate: step 6/6. Functionally, catalyzes the conversion of 1-hydroxy-2-methyl-2-(E)-butenyl 4-diphosphate (HMBPP) into a mixture of isopentenyl diphosphate (IPP) and dimethylallyl diphosphate (DMAPP). Acts in the terminal step of the DOXP/MEP pathway for isoprenoid precursor biosynthesis. In Tropheryma whipplei (strain TW08/27) (Whipple's bacillus), this protein is 4-hydroxy-3-methylbut-2-enyl diphosphate reductase.